Reading from the N-terminus, the 342-residue chain is Methionyl-tRNA formyltransferase (342 aa).

A (6S)-5,6,7,8-tetrahydrofolate-binding site is contributed by 108–111 (SLLP).

The protein belongs to the Fmt family.

The catalysed reaction is L-methionyl-tRNA(fMet) + (6R)-10-formyltetrahydrofolate = N-formyl-L-methionyl-tRNA(fMet) + (6S)-5,6,7,8-tetrahydrofolate + H(+). In terms of biological role, attaches a formyl group to the free amino group of methionyl-tRNA(fMet). The formyl group appears to play a dual role in the initiator identity of N-formylmethionyl-tRNA by promoting its recognition by IF2 and preventing the misappropriation of this tRNA by the elongation apparatus. This is Methionyl-tRNA formyltransferase from Prochlorococcus marinus (strain MIT 9303).